The chain runs to 840 residues: Cytosolic carboxypeptidase 2 (840 aa).

Residues 358 to 628 form the Peptidase M14 domain; sequence YPYTYTDLQC…HVCDTLLDFC (271 aa). Histidine 424, glutamate 427, and histidine 520 together coordinate Zn(2+). The Proton donor/acceptor role is filled by glutamate 592. The segment covering 706–719 has biased composition (basic residues); sequence MFKKKKKKSLQTRK. 2 disordered regions span residues 706–726 and 758–789; these read MFKK…EQYQ and ESSS…LDPS.

It belongs to the peptidase M14 family. As to quaternary structure, interacts with RARRES1, KIF11 and MAPRE1. It depends on Zn(2+) as a cofactor.

The protein resides in the cytoplasm. It localises to the cytosol. Its subcellular location is the cytoskeleton. It is found in the microtubule organizing center. The protein localises to the centrosome. The protein resides in the centriole. It localises to the cilium basal body. The enzyme catalyses (L-glutamyl)(n+1)-gamma-L-glutamyl-L-glutamyl-[protein] + H2O = (L-glutamyl)(n)-gamma-L-glutamyl-L-glutamyl-[protein] + L-glutamate. With respect to regulation, inhibited by RARRES1. In terms of biological role, metallocarboxypeptidase that mediates deglutamylation of tubulin and non-tubulin target proteins. Catalyzes the removal of polyglutamate side chains present on the gamma-carboxyl group of glutamate residues within the C-terminal tail of tubulin protein. Specifically cleaves tubulin long-side-chains, while it is not able to remove the branching point glutamate. Also catalyzes the removal of polyglutamate residues from the carboxy-terminus of non-tubulin proteins such as MYLK. This chain is Cytosolic carboxypeptidase 2 (AGBL2), found in Macaca fascicularis (Crab-eating macaque).